Consider the following 67-residue polypeptide: DNA-directed RNA polymerase subunit omega (67 aa).

This sequence belongs to the RNA polymerase subunit omega family. The RNAP catalytic core consists of 2 alpha, 1 beta, 1 beta' and 1 omega subunit. When a sigma factor is associated with the core the holoenzyme is formed, which can initiate transcription.

It catalyses the reaction RNA(n) + a ribonucleoside 5'-triphosphate = RNA(n+1) + diphosphate. In terms of biological role, promotes RNA polymerase assembly. Latches the N- and C-terminal regions of the beta' subunit thereby facilitating its interaction with the beta and alpha subunits. The polypeptide is DNA-directed RNA polymerase subunit omega (Cupriavidus metallidurans (strain ATCC 43123 / DSM 2839 / NBRC 102507 / CH34) (Ralstonia metallidurans)).